Consider the following 81-residue polypeptide: MKTLLLTLVVVTIVCLDLGYTLTCCNQQSSQPKTTTDCADNSCYKMTWRDHRGTRIERGCGCPQVKPGIKLECCKTNECNN.

A signal peptide spans 1-21 (MKTLLLTLVVVTIVCLDLGYT). 4 disulfide bridges follow: cysteine 24-cysteine 43, cysteine 38-cysteine 60, cysteine 62-cysteine 73, and cysteine 74-cysteine 79.

This sequence belongs to the three-finger toxin family. Short-chain subfamily. Type I alpha-neurotoxin sub-subfamily. In terms of tissue distribution, expressed by the venom gland.

It localises to the secreted. In terms of biological role, binds to muscle nicotinic acetylcholine receptor (nAChR) and inhibit acetylcholine from binding to the receptor, thereby impairing neuromuscular transmission. The chain is Short neurotoxin B from Aipysurus laevis (Olive sea snake).